The primary structure comprises 1047 residues: tRNA wybutosine-synthesizing protein 4 (1047 aa).

S-adenosyl-L-methionine contacts are provided by residues arginine 69, glycine 95, aspartate 122, 169 to 170, and glutamate 196; that span reads DL. The 190-residue stretch at 814 to 1003 folds into the JmjC domain; that stretch reads GRQYLRSISA…AAGRDVYGNR (190 aa).

This sequence belongs to the methyltransferase superfamily. LCMT family.

It catalyses the reaction 7-[(3S)-3-amino-3-carboxypropyl]wyosine(37) in tRNA(Phe) + S-adenosyl-L-methionine = 7-[(3S)-(3-amino-3-methoxycarbonyl)propyl]wyosine(37) in tRNA(Phe) + S-adenosyl-L-homocysteine. The catalysed reaction is 7-[(3S)-(3-amino-3-methoxycarbonyl)propyl]wyosine(37) in tRNA(Phe) + S-adenosyl-L-methionine + CO2 = wybutosine(37) in tRNA(Phe) + S-adenosyl-L-homocysteine + 2 H(+). It functions in the pathway tRNA modification; wybutosine-tRNA(Phe) biosynthesis. Its function is as follows. Probable S-adenosyl-L-methionine-dependent methyltransferase that acts as a component of the wybutosine biosynthesis pathway. Wybutosine is a hyper modified guanosine with a tricyclic base found at the 3'-position adjacent to the anticodon of eukaryotic phenylalanine tRNA. May methylate the carboxyl group of leucine residues to form alpha-leucine ester residues. The polypeptide is tRNA wybutosine-synthesizing protein 4 (ppm2) (Aspergillus fumigatus (strain ATCC MYA-4609 / CBS 101355 / FGSC A1100 / Af293) (Neosartorya fumigata)).